The chain runs to 283 residues: ATP phosphoribosyltransferase (283 aa).

The protein belongs to the ATP phosphoribosyltransferase family. Long subfamily. It depends on Mg(2+) as a cofactor.

It is found in the cytoplasm. The catalysed reaction is 1-(5-phospho-beta-D-ribosyl)-ATP + diphosphate = 5-phospho-alpha-D-ribose 1-diphosphate + ATP. Its pathway is amino-acid biosynthesis; L-histidine biosynthesis; L-histidine from 5-phospho-alpha-D-ribose 1-diphosphate: step 1/9. Feedback inhibited by histidine. Functionally, catalyzes the condensation of ATP and 5-phosphoribose 1-diphosphate to form N'-(5'-phosphoribosyl)-ATP (PR-ATP). Has a crucial role in the pathway because the rate of histidine biosynthesis seems to be controlled primarily by regulation of HisG enzymatic activity. This chain is ATP phosphoribosyltransferase, found in Bifidobacterium longum (strain DJO10A).